We begin with the raw amino-acid sequence, 147 residues long: uncharacterized protein (147 aa).

This is an uncharacterized protein from Human cytomegalovirus (strain AD169) (HHV-5).